A 164-amino-acid chain; its full sequence is Large ribosomal subunit protein eL24 (164 aa).

Disordered stretches follow at residues 63–82 and 117–164; these read KDAA…KPYS and ERIK…GGKA. Basic residues predominate over residues 71–81; that stretch reads KKRRRATKKPY. Residues 117-133 show a composition bias toward basic and acidic residues; the sequence is ERIKKTKDEKKAKKAEV.

Belongs to the eukaryotic ribosomal protein eL24 family.

The protein resides in the cytoplasm. In Cicer arietinum (Chickpea), this protein is Large ribosomal subunit protein eL24 (RPL24).